Consider the following 956-residue polypeptide: GAS2-like protein 2B (956 aa).

A Calponin-homology (CH) domain is found at 23 to 150 (YAMKEDLAEW…CLLELARRAS (128 aa)). Positions 191-263 (CDFKNLDQMV…HYLDKHDPCH (73 aa)) constitute a GAR domain. Polar residues-rich tracts occupy residues 332–353 (SSSY…QTPP) and 381–390 (DPQQLGNPQS). Disordered stretches follow at residues 332–361 (SSSY…SMSI), 378–406 (DTQD…ASQL), 853–885 (RPKI…SRNN), and 914–956 (VNSE…ESWV). Residues 859–868 (RRDNRPEKKP) are compositionally biased toward basic and acidic residues.

It belongs to the GAS2 family.

The protein resides in the cytoplasm. The protein localises to the cytoskeleton. It is found in the cilium basal body. Together with gas2l2.L, regulates ciliary orientation and performance. This chain is GAS2-like protein 2B, found in Xenopus laevis (African clawed frog).